Consider the following 833-residue polypeptide: G-type lectin S-receptor-like serine/threonine-protein kinase RKS1 (833 aa).

Residues 1–18 (MKVVFVIFFFFLFQFCIS) form the signal peptide. In terms of domain architecture, Bulb-type lectin spans 19–144 (VDTIMRRQSL…VTGRSFWESF (126 aa)). Residues 19-440 (VDTIMRRQSL…NGLSGKRRVL (422 aa)) are Extracellular-facing. N-linked (GlcNAc...) asparagine glycosylation is found at N79, N92, N100, N109, N228, and N256. An EGF-like domain is found at 280-330 (PKEQCDNYAHCGPNGYCDSPSSKTFECTCLPGFEPKFPRHWFLRDSSGGCT). 3 cysteine pairs are disulfide-bonded: C284-C296, C290-C306, and C308-C329. The PAN domain occupies 338–421 (CSEKDGFVKL…SGQDFYIRVD (84 aa)). N363 and N376 each carry an N-linked (GlcNAc...) asparagine glycan. Disulfide bonds link C369-C396 and C373-C379. Residues 441–461 (LILISLIAAVMLLTVILFCVV) form a helical membrane-spanning segment. Over 462 to 833 (RERRKSNRHR…DVTFSDIQGR (372 aa)) the chain is Cytoplasmic. A Protein kinase domain is found at 515–800 (FSSQNKLGAG…NLPNPKHPAF (286 aa)). Residues 521-529 (LGAGGFGPV) and K543 each bind ATP. A phosphoserine mark is found at S549 and S564. The segment at 604–621 (EQRAELDWPKRMEIVRGI) is caM-binding. D640 (proton acceptor) is an active-site residue. A phosphoserine mark is found at S644 and S657. T674 carries the post-translational modification Phosphothreonine. 2 positions are modified to phosphoserine: S717 and S821.

This sequence belongs to the protein kinase superfamily. Ser/Thr protein kinase family.

The protein resides in the cell membrane. The enzyme catalyses L-seryl-[protein] + ATP = O-phospho-L-seryl-[protein] + ADP + H(+). The catalysed reaction is L-threonyl-[protein] + ATP = O-phospho-L-threonyl-[protein] + ADP + H(+). This is G-type lectin S-receptor-like serine/threonine-protein kinase RKS1 (RKS1) from Arabidopsis thaliana (Mouse-ear cress).